The sequence spans 365 residues: Medium chain reductase pydE (365 aa).

The 342-residue stretch at 21–362 folds into the Enoyl reductase (ER) domain; sequence KLIDSLPVPP…SKRARGKVLI (342 aa). NADP(+) contacts are provided by residues 185-188, tyrosine 226, 274-275, and 354-355; these read SGSV, IG, and KR.

This sequence belongs to the zinc-containing alcohol dehydrogenase family. In terms of assembly, monomer.

The protein operates within mycotoxin biosynthesis. Its function is as follows. Medium chain reductase; part of the gene cluster that mediates the biosynthesis of pyrrocidines, fungal natural products containing a macrocyclic para-cyclophane connected to a decahydrofluorene ring system that show potent antibiotic activities toward Gram-negative bacteria. Within the pathway, pydE functions synergistically with pydB, pydX and pydZ to form the cyclophane. The pathway begins with the PKS-NRPS pydA which, with the help of the trans-enoyl reductase pydC, synthesizes the polyketide-tyrosyl acyl thioester product which can be reductively off-loaded by the terminal reductase (R) domain in pydA. The alpha/beta hydrolase pydG is then required to catalyze the subsequent Knoevenagel condensation that affords the 3-pyrrolin-2-one ring, whereas the four proteins pydB, pydE, pydX and pydZ then function synergistically to form the cyclophane. PydB and the membrane-bound pydX and pydZ are lipid-binding proteins that can sequester and mold the pdyG product into the inverse S-shape. Binding of the medium chain reductase pydE to the complex would trigger the cascade oxidative cyclization. PydY is involved in the Diels-Alder cycloaddition that forms the decahydrofluorene core. Additional non-enzymatic hydroxylation yields pyrrocidine A2 which can be further reduced into pyrrocidine B by an endogenous reductase. In Acremonium sp, this protein is Medium chain reductase pydE.